A 494-amino-acid chain; its full sequence is tRNA-2-methylthio-N(6)-dimethylallyladenosine synthase (494 aa).

Residues 5–121 (RTYQVRTYGC…LPALLERARV (117 aa)) enclose the MTTase N-terminal domain. [4Fe-4S] cluster contacts are provided by C14, C50, C84, C158, C162, and C165. A Radical SAM core domain is found at 144 to 374 (RESVYAAWVA…LELQERISEE (231 aa)). A TRAM domain is found at 377-446 (AKFVGREVEV…PHHLVADSGI (70 aa)). Residues 458–468 (WEARNAPERRP) are compositionally biased toward basic and acidic residues. A disordered region spans residues 458-494 (WEARNAPERRPTGVLLGMPKVGAPEPQPSVVGGCCDS).

Belongs to the methylthiotransferase family. MiaB subfamily. As to quaternary structure, monomer. It depends on [4Fe-4S] cluster as a cofactor.

The protein localises to the cytoplasm. It carries out the reaction N(6)-dimethylallyladenosine(37) in tRNA + (sulfur carrier)-SH + AH2 + 2 S-adenosyl-L-methionine = 2-methylsulfanyl-N(6)-dimethylallyladenosine(37) in tRNA + (sulfur carrier)-H + 5'-deoxyadenosine + L-methionine + A + S-adenosyl-L-homocysteine + 2 H(+). Functionally, catalyzes the methylthiolation of N6-(dimethylallyl)adenosine (i(6)A), leading to the formation of 2-methylthio-N6-(dimethylallyl)adenosine (ms(2)i(6)A) at position 37 in tRNAs that read codons beginning with uridine. This is tRNA-2-methylthio-N(6)-dimethylallyladenosine synthase from Thermobifida fusca (strain YX).